The primary structure comprises 427 residues: Enolase 1 (427 aa).

Residue Gln-162 participates in (2R)-2-phosphoglycerate binding. The active-site Proton donor is Glu-204. Mg(2+) is bound by residues Asp-241, Glu-285, and Asp-312. Residues Lys-337, Arg-366, Ser-367, and Lys-388 each coordinate (2R)-2-phosphoglycerate. Catalysis depends on Lys-337, which acts as the Proton acceptor.

Belongs to the enolase family. It depends on Mg(2+) as a cofactor.

It is found in the cytoplasm. The protein localises to the secreted. Its subcellular location is the cell surface. It carries out the reaction (2R)-2-phosphoglycerate = phosphoenolpyruvate + H2O. It participates in carbohydrate degradation; glycolysis; pyruvate from D-glyceraldehyde 3-phosphate: step 4/5. In terms of biological role, catalyzes the reversible conversion of 2-phosphoglycerate (2-PG) into phosphoenolpyruvate (PEP). It is essential for the degradation of carbohydrates via glycolysis. In Chlorobaculum tepidum (strain ATCC 49652 / DSM 12025 / NBRC 103806 / TLS) (Chlorobium tepidum), this protein is Enolase 1.